The chain runs to 421 residues: ATP-dependent RNA helicase RhlB (421 aa).

Positions 9–37 (QKFSDFALHPKVVEALEKKGFHNCTPIQA) match the Q motif motif. In terms of domain architecture, Helicase ATP-binding spans 40-219 (LPLTLAGRDV…FEQMNNAEYI (180 aa)). 53-60 (AQTGTGKT) lines the ATP pocket. Positions 165–168 (DEAD) match the DEAD box motif. Residues 245–390 (RLLQTLIEEE…VSKYNPDALM (146 aa)) enclose the Helicase C-terminal domain. Positions 392–421 (DLPKPLRLTRPRTGNGPRRTGAPRNRRRSG) are disordered. The span at 402-414 (PRTGNGPRRTGAP) shows a compositional bias: low complexity.

It belongs to the DEAD box helicase family. RhlB subfamily. In terms of assembly, component of the RNA degradosome, which is a multiprotein complex involved in RNA processing and mRNA degradation.

The protein resides in the cytoplasm. It catalyses the reaction ATP + H2O = ADP + phosphate + H(+). In terms of biological role, DEAD-box RNA helicase involved in RNA degradation. Has RNA-dependent ATPase activity and unwinds double-stranded RNA. This is ATP-dependent RNA helicase RhlB from Escherichia coli (strain SMS-3-5 / SECEC).